The sequence spans 773 residues: Leucine-rich repeat and calponin homology domain-containing protein 2 (773 aa).

The segment at 1–46 (MAASQGGGGNSGGGGCSGGGSGGGGGAAGGGGGGGGGGGGGAGAGG) is disordered. LRR repeat units follow at residues 97–118 (NSGI…GYDL), 120–141 (DTTQ…VWLF), 143–164 (PLET…IKNL), 166–187 (MLTY…LFDL), 188–209 (PLKV…IGKL), 211–232 (DLME…MGKL), 234–256 (SLKE…GDLP), 257–277 (LVKL…YRKL), and 279–300 (HLQV…ICLK). 3 disordered regions span residues 324–409 (LDLP…QKDQ), 438–478 (FLKG…LKEV), and 573–633 (KYKS…SRQE). Composition is skewed to basic and acidic residues over residues 386–396 (SNREQTSRNDS) and 440–466 (KGKE…KEQL). Residues 594 to 603 (AHMSAQSPVS) are compositionally biased toward polar residues. Residues 650–763 (LREEREQIRQ…VTVQALLELP (114 aa)) form the Calponin-homology (CH) domain.

In terms of biological role, may play a role in the organization of the cytoskeleton. This chain is Leucine-rich repeat and calponin homology domain-containing protein 2 (Lrch2), found in Mus musculus (Mouse).